Consider the following 432-residue polypeptide: Serine--tRNA ligase (432 aa).

L-serine is bound at residue 237-239; the sequence is TSE. Position 268 to 270 (268 to 270) interacts with ATP; that stretch reads RSE. Residue Glu291 participates in L-serine binding. 355 to 358 serves as a coordination point for ATP; that stretch reads EISS. Ser390 is a binding site for L-serine.

The protein belongs to the class-II aminoacyl-tRNA synthetase family. Type-1 seryl-tRNA synthetase subfamily. As to quaternary structure, homodimer. The tRNA molecule binds across the dimer.

It localises to the cytoplasm. It carries out the reaction tRNA(Ser) + L-serine + ATP = L-seryl-tRNA(Ser) + AMP + diphosphate + H(+). The catalysed reaction is tRNA(Sec) + L-serine + ATP = L-seryl-tRNA(Sec) + AMP + diphosphate + H(+). It functions in the pathway aminoacyl-tRNA biosynthesis; selenocysteinyl-tRNA(Sec) biosynthesis; L-seryl-tRNA(Sec) from L-serine and tRNA(Sec): step 1/1. Catalyzes the attachment of serine to tRNA(Ser). Is also able to aminoacylate tRNA(Sec) with serine, to form the misacylated tRNA L-seryl-tRNA(Sec), which will be further converted into selenocysteinyl-tRNA(Sec). In Methylobacillus flagellatus (strain ATCC 51484 / DSM 6875 / VKM B-1610 / KT), this protein is Serine--tRNA ligase.